The primary structure comprises 474 residues: MESYSPSIQKLCVFLKPESDISNTGISYLNNFLADMSNAIIVESIHSSKSHKHKTILIEDIESALNVVFPSEIADSIINQSKGRIQSTSLKNLMQVKTFNNGGNNNNNNEQDNDLQEKEQNELSDDSDVEGFEIIPNNNNIYSHDVSLCFPIDLVCRVTLDYICRKKVIHQNPSDFYKVIEQQQSNHVIYTYISYALEVITTKILIKISSSTDLIDEDIIRKVIQDNHHLNSVRHKNIQASNIAGKLLDSSSSSNSNLQTSLSSSFIFSSSSNNTTTFTQQEQQEQFNDDKISGDEIEFEINNSKYLEKEDKKDQLIQKDEEIILKTFNDNNNNNNNNNNNNNNNNNNNNNNININNDNDNNNNNNKNNDNKNYDNNNNNNADKIEKLSPVNNNVKNSEIEKNIEKLKNINNNNNVEINEALISIIKETCKNIPSSSFSSVKNLKRSPPSLFKFKEPIDLVQVLAEGGIHMEAT.

Disordered stretches follow at residues 99–123 (FNNG…QNEL), 276–295 (TTFT…ISGD), and 328–394 (FNDN…VNNN). 3 stretches are compositionally biased toward low complexity: residues 100–110 (NNGGNNNNNNE), 276–286 (TTFTQQEQQEQ), and 329–368 (NDNN…NNKN).

The protein belongs to the histone H2B family.

The protein is Histone H2B.v2 (H2Bv2) of Dictyostelium discoideum (Social amoeba).